The primary structure comprises 453 residues: Glutamyl-tRNA(Gln) amidotransferase subunit A (453 aa).

Residues Lys53 and Ser128 each act as charge relay system in the active site. Catalysis depends on Ser152, which acts as the Acyl-ester intermediate.

The protein belongs to the amidase family. GatA subfamily. In terms of assembly, heterotrimer of A, B and C subunits.

It catalyses the reaction L-glutamyl-tRNA(Gln) + L-glutamine + ATP + H2O = L-glutaminyl-tRNA(Gln) + L-glutamate + ADP + phosphate + H(+). In terms of biological role, allows the formation of correctly charged Gln-tRNA(Gln) through the transamidation of misacylated Glu-tRNA(Gln) in organisms which lack glutaminyl-tRNA synthetase. The reaction takes place in the presence of glutamine and ATP through an activated gamma-phospho-Glu-tRNA(Gln). The protein is Glutamyl-tRNA(Gln) amidotransferase subunit A of Helicobacter pylori (strain P12).